Reading from the N-terminus, the 196-residue chain is DNA polymerase epsilon subunit D (196 aa).

Residues 125-196 form a disordered region; it reads RKKEKLDSGE…ETRVQNLEQT (72 aa). Positions 133-143 are enriched in acidic residues; the sequence is GEVDADGDIDM. The span at 144-159 shows a compositional bias: basic and acidic residues; that stretch reads GEDKENVPVEKVKEHD. Residues 160–173 show a composition bias toward acidic residues; that stretch reads EIEEQGDALQDVEE. The segment covering 174 to 188 has biased composition (basic and acidic residues); sequence SSEKKQKTESQDVET. Serine 183 is subject to Phosphoserine; by ATM or ATR.

As to quaternary structure, DNA polymerase epsilon is a heterotetramer consisting of POL2, DPB2, DPB3 and DPB4. Component of the ISW2 complex, which at least consists of ISW2, ITC1, DLS1 and DPB4.

It localises to the nucleus. As accessory component of the DNA polymerase epsilon (DNA polymerase II) participates in chromosomal DNA replication. It is required during synthesis of the leading and lagging DNA strands at the replication fork and binds at/or near replication origins and moves along DNA with the replication fork. It has 3'-5' proofreading exonuclease activity that correct errors arising during DNA replication. It is also involved in DNA synthesis during DNA repair. Also functions as a component of the ISW2 complex, which acts in remodeling the chromatin by catalyzing an ATP-dependent alteration in the structure of nucleosomal DNA. The ISW2 complex is involved in coordinating transcriptional repression and in inheritance of telomeric silencing. It is involved in repression of MAT a-specific genes, INO1, and early meiotic genes during mitotic growth dependent upon transcription factor UME6 and in a parallel pathway to the RPD3-SIN3 histone deacetylase complex. This chain is DNA polymerase epsilon subunit D (DPB4), found in Saccharomyces cerevisiae (strain ATCC 204508 / S288c) (Baker's yeast).